The following is a 343-amino-acid chain: D-alanine--D-alanine ligase (343 aa).

Residues 129–335 form the ATP-grasp domain; the sequence is KYVLENFGVK…YGELISEIIE (207 aa). 162–217 provides a ligand contact to ATP; it reads ENKLGYDVFIKPSNSGSSVGISKAHNREELEAGLEEALKFDRKVLVEVALNAREIE. The Mg(2+) site is built by Asp-288, Glu-302, and Asn-304.

It belongs to the D-alanine--D-alanine ligase family. Requires Mg(2+) as cofactor. The cofactor is Mn(2+).

Its subcellular location is the cytoplasm. It carries out the reaction 2 D-alanine + ATP = D-alanyl-D-alanine + ADP + phosphate + H(+). It functions in the pathway cell wall biogenesis; peptidoglycan biosynthesis. Cell wall formation. In Clostridium novyi (strain NT), this protein is D-alanine--D-alanine ligase.